A 414-amino-acid polypeptide reads, in one-letter code: Chaperone protein dnaJ 39 (414 aa).

Residues 1-24 (MATHSSRSENKDAGEEDELRRRNP) show a composition bias toward basic and acidic residues. The disordered stretch occupies residues 1 to 36 (MATHSSRSENKDAGEEDELRRRNPYEVLGIPSNSTD). A J domain is found at 23–88 (NPYEVLGIPS…ENRRLYDTTG (66 aa)). Positions 296-324 (EKESLRSTEAQIVSKRTELLKFEAEYHEV) form a coiled coil. Positions 362–395 (TKQGSSKSRSWSKKKSSLLMEPREEGEVAVREEG) are disordered. The span at 382–395 (EPREEGEVAVREEG) shows a compositional bias: basic and acidic residues.

This sequence belongs to the DnaJ family. C/III subfamily. As to expression, expressed constitutively at low levels in seedlings, roots, leaves, stems, flowers and siliques.

Its subcellular location is the membrane. In terms of biological role, plays a continuous role in plant development probably in the structural organization of compartments. Seems to be involved in early gravitropic signal transduction within the gravity-perceiving cells (statocytes). The chain is Chaperone protein dnaJ 39 (ATJ39) from Arabidopsis thaliana (Mouse-ear cress).